The chain runs to 430 residues: GTPase Obg (430 aa).

One can recognise an Obg domain in the interval 1 to 158 (MFVDQVKISL…LEVTLELKLL (158 aa)). The tract at residues 118 to 145 (RGGRGGRGNSRFATPRNPAPDFSENGEP) is disordered. The OBG-type G domain occupies 159-329 (ADVGLVGFPS…LLYQIADKLE (171 aa)). Residues 165-172 (GFPSVGKS), 190-194 (FTTIK), 212-215 (DLPG), 282-285 (NKMD), and 310-312 (STI) each bind GTP. 2 residues coordinate Mg(2+): Ser172 and Thr192. The OCT domain maps to 352–430 (KHTPSADKFT…ILGGEFEFVE (79 aa)).

The protein belongs to the TRAFAC class OBG-HflX-like GTPase superfamily. OBG GTPase family. In terms of assembly, monomer. It depends on Mg(2+) as a cofactor.

The protein localises to the cytoplasm. In terms of biological role, an essential GTPase which binds GTP, GDP and possibly (p)ppGpp with moderate affinity, with high nucleotide exchange rates and a fairly low GTP hydrolysis rate. Plays a role in control of the cell cycle, stress response, ribosome biogenesis and in those bacteria that undergo differentiation, in morphogenesis control. This is GTPase Obg from Staphylococcus epidermidis (strain ATCC 35984 / DSM 28319 / BCRC 17069 / CCUG 31568 / BM 3577 / RP62A).